Reading from the N-terminus, the 165-residue chain is Nucleotide-binding protein A9601_05361 (165 aa).

This sequence belongs to the YajQ family.

Nucleotide-binding protein. This is Nucleotide-binding protein A9601_05361 from Prochlorococcus marinus (strain AS9601).